We begin with the raw amino-acid sequence, 515 residues long: MTATPKPLVLIILDGFGHSESPDYNAIYAAKKPVWDRLLATQPHGLISGSGMDVGLPDGQMGNSEVGHMNLGAGRVVYQDFTRVTKAIRDGEFFENPVIAAAVDKAVAADKAVHILGLLSPGGVHSHEDHLVAMAQMAARRGAGKIYLHAFLDGRDTPPKSAQPSLERLDATFAGLGKGRIASIIGRYFAMDRDNRWDRVQAAYELIVDGKAEFTADSSVAALEAAYARGESDEFVKATAVVPAGAEAVRVEDGDAVIFMNFRADRARELSRAFVEPAFKEFPREQAPQLAGFVMLTQYAASIPAPCAFPPEPLTNVLGEYLAKHGKTQLRIAETEKYAHVTFFFSGGREEPYEGEERILIPSPKVATYDLQPEMSAPEVTDRIVEAIEQQRYDVIVVNYANGDMVGHTGVFEAAVKAVECLDTCMGRIVEALDKVGGEALITADHGNVEQMEDESTGQAHTAHTCEPVPFVYVGKRKLSIREGGVLADVAPTMLTLMGLEQPAEMTGRSIVTLG.

Mn(2+)-binding residues include Asp14 and Ser64. The active-site Phosphoserine intermediate is Ser64. Residues His125, 155–156 (RD), Arg187, Arg193, 263–266 (RADR), and Lys337 contribute to the substrate site. 5 residues coordinate Mn(2+): Asp404, His408, Asp445, His446, and His464.

This sequence belongs to the BPG-independent phosphoglycerate mutase family. In terms of assembly, monomer. Mn(2+) serves as cofactor.

It carries out the reaction (2R)-2-phosphoglycerate = (2R)-3-phosphoglycerate. It functions in the pathway carbohydrate degradation; glycolysis; pyruvate from D-glyceraldehyde 3-phosphate: step 3/5. Catalyzes the interconversion of 2-phosphoglycerate and 3-phosphoglycerate. The polypeptide is 2,3-bisphosphoglycerate-independent phosphoglycerate mutase (Pseudomonas aeruginosa (strain UCBPP-PA14)).